The following is a 765-amino-acid chain: BRCA1-associated RING domain protein 1 (765 aa).

The interval 20-113 (MEPATDGLWA…KLQNLLHDNK (94 aa)) is required for BRCA1 binding. The segment at 44–81 (CSRCANILKEPVCLGGCEHIFCSGCISDCVGSGCPVCY) adopts an RING-type zinc-finger fold. Lys152 is covalently cross-linked (Glycyl lysine isopeptide (Lys-Gly) (interchain with G-Cter in SUMO2)). Disordered stretches follow at residues 183–229 (AVPK…EELK), 299–328 (KDLR…GSNI), and 369–410 (NASD…MPAR). Positions 195–204 (SAKKHPKKSV) are enriched in basic residues. The span at 207–229 (INREENLRPETKDSRFDSKEELK) shows a compositional bias: basic and acidic residues. The span at 316–328 (PTTSTSDSCGSNI) shows a compositional bias: polar residues. A Phosphoserine modification is found at Ser378. Thr381 carries the phosphothreonine modification. The segment covering 391 to 403 (HRQMMSSPSTVKL) has biased composition (polar residues). Residue Lys411 forms a Glycyl lysine isopeptide (Lys-Gly) (interchain with G-Cter in SUMO2) linkage. 3 ANK repeats span residues 415–447 (RGET…VKDH), 448–480 (AGWT…TPGY), and 481–513 (QNDS…AVNI). An ANK 4; degenerate repeat occupies 514-534 (FGVRPVDYTDNENIRSLLLLP). A flexible linker region spans residues 542 to 546 (TSQCS). BRCT domains are found at residues 549-641 (NTGQ…KYEV) and 655-765 (LLPK…PLDS).

In terms of assembly, homo- and heterodimer. Heterodimer (RING-type zinc finger) with BRCA1. Heterodimer (via ANK repeats and BRCT domains) with CSTF1/CSTF-50. Component of the BRCA1-A complex, at least composed of the BRCA1, BARD1, UIMC1/RAP80, ABRAXAS1, BRCC3/BRCC36, BABAM2 and BABAM1/NBA1. Interacts with UBXN1. Processed during apoptosis. The homodimer is more susceptible to proteolytic cleavage than the BARD1/BRCA1 heterodimer.

It localises to the nucleus. Its subcellular location is the cytoplasm. It carries out the reaction S-ubiquitinyl-[E2 ubiquitin-conjugating enzyme]-L-cysteine + [acceptor protein]-L-lysine = [E2 ubiquitin-conjugating enzyme]-L-cysteine + N(6)-ubiquitinyl-[acceptor protein]-L-lysine.. It functions in the pathway protein modification; protein ubiquitination. In terms of biological role, E3 ubiquitin-protein ligase. The BRCA1-BARD1 heterodimer specifically mediates the formation of 'Lys-6'-linked polyubiquitin chains and coordinates a diverse range of cellular pathways such as DNA damage repair, ubiquitination and transcriptional regulation to maintain genomic stability. Plays a central role in the control of the cell cycle in response to DNA damage. Acts by mediating ubiquitin E3 ligase activity that is required for its tumor suppressor function. Also forms a heterodimer with CSTF1/CSTF-50 to modulate mRNA processing and RNAP II stability by inhibiting pre-mRNA 3' cleavage. The protein is BRCA1-associated RING domain protein 1 (Bard1) of Mus musculus (Mouse).